Consider the following 90-residue polypeptide: Probable Fe(2+)-trafficking protein (90 aa).

This sequence belongs to the Fe(2+)-trafficking protein family.

Could be a mediator in iron transactions between iron acquisition and iron-requiring processes, such as synthesis and/or repair of Fe-S clusters in biosynthetic enzymes. This Pseudomonas putida (strain W619) protein is Probable Fe(2+)-trafficking protein.